We begin with the raw amino-acid sequence, 650 residues long: 1-deoxy-D-xylulose-5-phosphate synthase (650 aa).

Thiamine diphosphate is bound by residues H73 and 113–115 (SHA). D145 serves as a coordination point for Mg(2+). Thiamine diphosphate is bound by residues 146 to 147 (GA), N175, Y287, and E369. N175 is a Mg(2+) binding site.

It belongs to the transketolase family. DXPS subfamily. Homodimer. Mg(2+) is required as a cofactor. The cofactor is thiamine diphosphate.

It carries out the reaction D-glyceraldehyde 3-phosphate + pyruvate + H(+) = 1-deoxy-D-xylulose 5-phosphate + CO2. Its pathway is metabolic intermediate biosynthesis; 1-deoxy-D-xylulose 5-phosphate biosynthesis; 1-deoxy-D-xylulose 5-phosphate from D-glyceraldehyde 3-phosphate and pyruvate: step 1/1. In terms of biological role, catalyzes the acyloin condensation reaction between C atoms 2 and 3 of pyruvate and glyceraldehyde 3-phosphate to yield 1-deoxy-D-xylulose-5-phosphate (DXP). This chain is 1-deoxy-D-xylulose-5-phosphate synthase, found in Leifsonia xyli subsp. xyli (strain CTCB07).